Here is a 210-residue protein sequence, read N- to C-terminus: MSNPMKTALSLVPMVIEQTNRGERAYDIFSRLLKERIIFINGPVEDSMAMLVCAQLLFLEAENPKKEISLYINSPGGVVTSGMAIYDTMQFIRPPVSTLCMGQAASMGSLLLTAGAKGHRFTLPNARIMVHQPSGGFQGQASDIERHAQDIIKMKRRLNEIYVQHTGQDYEVIERTLDRDHFMTAEEAKQFGLVDDVIQYRAETEKEEKD.

The Nucleophile role is filled by S106. H131 is a catalytic residue.

Belongs to the peptidase S14 family. In terms of assembly, fourteen ClpP subunits assemble into 2 heptameric rings which stack back to back to give a disk-like structure with a central cavity, resembling the structure of eukaryotic proteasomes.

It is found in the cytoplasm. The catalysed reaction is Hydrolysis of proteins to small peptides in the presence of ATP and magnesium. alpha-casein is the usual test substrate. In the absence of ATP, only oligopeptides shorter than five residues are hydrolyzed (such as succinyl-Leu-Tyr-|-NHMec, and Leu-Tyr-Leu-|-Tyr-Trp, in which cleavage of the -Tyr-|-Leu- and -Tyr-|-Trp bonds also occurs).. Functionally, cleaves peptides in various proteins in a process that requires ATP hydrolysis. Has a chymotrypsin-like activity. Plays a major role in the degradation of misfolded proteins. In Bartonella quintana (strain Toulouse) (Rochalimaea quintana), this protein is ATP-dependent Clp protease proteolytic subunit.